The following is a 404-amino-acid chain: G1/S-specific cyclin-E2 (404 aa).

The tract at residues 1–41 (MSRRSSRLQAKQHAQPNQPDSPQETQIIQAKKRKTAQDVKK) is disordered. The span at 7–28 (RLQAKQHAQPNQPDSPQETQII) shows a compositional bias: polar residues. S21 carries the phosphoserine modification. An N6-lactoyllysine modification is found at K348. A Phosphoserine modification is found at S383. Residue T392 is modified to Phosphothreonine.

It belongs to the cyclin family. Cyclin E subfamily. Interacts with the CDK2 (in vivo) and CDK3 (in vitro) protein kinases to form a serine/threonine kinase holoenzyme complex. The cyclin subunit imparts substrate specificity to the complex. In terms of processing, phosphorylation by CDK2 triggers its release from CDK2 and degradation via the ubiquitin proteasome pathway. Lactylated at Lys-348. Delactylated by SIRT3. As to expression, highest levels in adult testis, thymus and brain. Lower levels in placenta, spleen and colon.

It is found in the nucleus. Essential for the control of the cell cycle at the late G1 and early S phase. In Mus musculus (Mouse), this protein is G1/S-specific cyclin-E2 (Ccne2).